Consider the following 277-residue polypeptide: Carbonyl reductase [NADPH] 1 (277 aa).

NADP(+)-binding positions include 10 to 34 (VTGANKGVGFAITRALCRLFSGDVL), 63 to 64 (DI), and Asn-90. A Phosphoserine modification is found at Ser-30. Glutathione contacts are provided by residues 95–97 (FKM) and Gln-106. Ser-140 contacts substrate. 193-194 (AY) serves as a coordination point for glutathione. Catalysis depends on Tyr-194, which acts as the Proton acceptor. Residues 194-198 (YGVTK) and 231-233 (VRT) each bind NADP(+).

It belongs to the short-chain dehydrogenases/reductases (SDR) family. Monomer. Present in liver and kidney.

The protein resides in the cytoplasm. It carries out the reaction a secondary alcohol + NADP(+) = a ketone + NADPH + H(+). The enzyme catalyses prostaglandin F2alpha + NADP(+) = prostaglandin E2 + NADPH + H(+). It catalyses the reaction prostaglandin E1 + NADP(+) = 15-oxoprostaglandin E1 + NADPH + H(+). The catalysed reaction is menadione + NADPH + H(+) = menadiol + NADP(+). It carries out the reaction prostaglandin D2 + NADP(+) = 15-oxoprostaglandin D2 + NADPH + H(+). The enzyme catalyses prostaglandin E2 + NADP(+) = 15-oxoprostaglandin E2 + NADPH + H(+). It catalyses the reaction prostaglandin F2alpha + NADP(+) = 15-oxoprostaglandin F2alpha + NADPH + H(+). The catalysed reaction is daunorubicin + NADPH + H(+) = 13-dihydrodaunorubicin + NADP(+). It carries out the reaction S-nitrosoglutathione + NADPH + H(+) = S-(hydroxysulfenamide)glutathione + NADP(+). The enzyme catalyses a primary alcohol + NADP(+) = an aldehyde + NADPH + H(+). It catalyses the reaction cortisol + NADPH + H(+) = 20beta-dihydrocortisol + NADP(+). The catalysed reaction is corticosterone + NADPH + H(+) = 20beta-dihydrocorticosterone + NADP(+). Functionally, NADPH-dependent reductase with broad substrate specificity. Catalyzes the reduction of a wide variety of carbonyl compounds including quinones, prostaglandins, menadione, plus various xenobiotics. Catalyzes the reduction of the antitumor anthracyclines doxorubicin and daunorubicin to the cardiotoxic compounds doxorubicinol and daunorubicinol. Can convert prostaglandin E to prostaglandin F2-alpha. Can bind glutathione, which explains its higher affinity for glutathione-conjugated substrates. Catalyzes the reduction of S-nitrosoglutathione. In addition, participates in the glucocorticoid metabolism by catalyzing the NADPH-dependent cortisol/corticosterone into 20beta-dihydrocortisol (20b-DHF) or 20beta-corticosterone (20b-DHB), which are weak agonists of NR3C1 and NR3C2 in adipose tissue. The polypeptide is Carbonyl reductase [NADPH] 1 (Oryctolagus cuniculus (Rabbit)).